A 338-amino-acid chain; its full sequence is Ketol-acid reductoisomerase (NADP(+)) (338 aa).

In terms of domain architecture, KARI N-terminal Rossmann spans 1-181; it reads MKVFYDKDCD…GGGRTGIIET (181 aa). NADP(+)-binding positions include 24–27, R47, S50, T52, and 82–85; these read YGSQ and DEFQ. H107 is a catalytic residue. An NADP(+)-binding site is contributed by G133. One can recognise a KARI C-terminal knotted domain in the interval 182-327; that stretch reads TFKDETETDL…EQLRSMMPWI (146 aa). Residues D190, E194, E226, and E230 each contribute to the Mg(2+) site. S251 lines the substrate pocket.

It belongs to the ketol-acid reductoisomerase family. Mg(2+) is required as a cofactor.

It carries out the reaction (2R)-2,3-dihydroxy-3-methylbutanoate + NADP(+) = (2S)-2-acetolactate + NADPH + H(+). The enzyme catalyses (2R,3R)-2,3-dihydroxy-3-methylpentanoate + NADP(+) = (S)-2-ethyl-2-hydroxy-3-oxobutanoate + NADPH + H(+). The protein operates within amino-acid biosynthesis; L-isoleucine biosynthesis; L-isoleucine from 2-oxobutanoate: step 2/4. It participates in amino-acid biosynthesis; L-valine biosynthesis; L-valine from pyruvate: step 2/4. Involved in the biosynthesis of branched-chain amino acids (BCAA). Catalyzes an alkyl-migration followed by a ketol-acid reduction of (S)-2-acetolactate (S2AL) to yield (R)-2,3-dihydroxy-isovalerate. In the isomerase reaction, S2AL is rearranged via a Mg-dependent methyl migration to produce 3-hydroxy-3-methyl-2-ketobutyrate (HMKB). In the reductase reaction, this 2-ketoacid undergoes a metal-dependent reduction by NADPH to yield (R)-2,3-dihydroxy-isovalerate. The protein is Ketol-acid reductoisomerase (NADP(+)) of Pseudomonas fluorescens (strain ATCC BAA-477 / NRRL B-23932 / Pf-5).